The sequence spans 583 residues: Hyaluronan synthase-related protein (583 aa).

Residues 1–29 are Cytoplasmic-facing; it reads MENTTDPENIPVSKPKYPTIRRILSQTFR. Residues 30 to 50 form a helical membrane-spanning segment; sequence ILLLFSITTAYVLGYQALCHQ. The Extracellular portion of the chain corresponds to 51-52; that stretch reads GL. Residues 53 to 73 traverse the membrane as a helical segment; the sequence is LITFGLYGAAMLLHLLMQGIF. The Cytoplasmic portion of the chain corresponds to 74 to 393; sequence ANLEIRRIEK…CNAQWWHQHH (320 aa). A helical transmembrane segment spans residues 394-414; the sequence is IWMTYESATGIFFPFFVTAVL. At 415-425 the chain is on the extracellular side; the sequence is IRLMYSSSLCN. A helical transmembrane segment spans residues 426 to 446; sequence IVWLFLCIQIMSLLLSLYASW. The Cytoplasmic portion of the chain corresponds to 447–457; sequence QSKKLSMVLMS. The chain crosses the membrane as a helical span at residues 458-478; the sequence is LYSTLYIIWLLPCQLVALLTI. Residues 479-497 are Extracellular-facing; it reads AKSDWGTSGRKKVVNNYVP. Residues 498-518 form a helical membrane-spanning segment; that stretch reads LFSLSIWAAVLLGGLCYSMYI. Residues 519-535 lie on the Cytoplasmic side of the membrane; it reads GCRKDWSKPQANRELYH. The helical transmembrane segment at 536–556 threads the bilayer; it reads LLYGCAGYMAYWVLMTVIYCV. The Extracellular segment spans residues 557–583; the sequence is SGSCCKMRSQAVPQTHDITSLSVSLLV.

This sequence belongs to the NodC/HAS family.

The protein localises to the membrane. The sequence is that of Hyaluronan synthase-related protein (has-rs) from Xenopus laevis (African clawed frog).